A 486-amino-acid chain; its full sequence is Probable glycine dehydrogenase (decarboxylating) subunit 2 (486 aa).

Residues 1–26 (MLIFESSRPGRQARAQAPKPTAATND) are disordered. Position 264 is an N6-(pyridoxal phosphate)lysine (K264).

The protein belongs to the GcvP family. C-terminal subunit subfamily. In terms of assembly, the glycine cleavage system is composed of four proteins: P, T, L and H. In this organism, the P 'protein' is a heterodimer of two subunits. The cofactor is pyridoxal 5'-phosphate.

The catalysed reaction is N(6)-[(R)-lipoyl]-L-lysyl-[glycine-cleavage complex H protein] + glycine + H(+) = N(6)-[(R)-S(8)-aminomethyldihydrolipoyl]-L-lysyl-[glycine-cleavage complex H protein] + CO2. The glycine cleavage system catalyzes the degradation of glycine. The P protein binds the alpha-amino group of glycine through its pyridoxal phosphate cofactor; CO(2) is released and the remaining methylamine moiety is then transferred to the lipoamide cofactor of the H protein. The chain is Probable glycine dehydrogenase (decarboxylating) subunit 2 from Nitrosococcus oceani (strain ATCC 19707 / BCRC 17464 / JCM 30415 / NCIMB 11848 / C-107).